Reading from the N-terminus, the 281-residue chain is Pantothenate synthetase (281 aa).

26 to 33 is an ATP binding site; sequence MGSLHEGH. Catalysis depends on H33, which acts as the Proton donor. Q57 is a binding site for (R)-pantoate. Q57 is a beta-alanine binding site. Residue 144 to 147 coordinates ATP; that stretch reads GKKD. Q150 contributes to the (R)-pantoate binding site. ATP contacts are provided by residues A173 and 181–184; that span reads LSSR.

Belongs to the pantothenate synthetase family. As to quaternary structure, homodimer.

It localises to the cytoplasm. The catalysed reaction is (R)-pantoate + beta-alanine + ATP = (R)-pantothenate + AMP + diphosphate + H(+). The protein operates within cofactor biosynthesis; (R)-pantothenate biosynthesis; (R)-pantothenate from (R)-pantoate and beta-alanine: step 1/1. Catalyzes the condensation of pantoate with beta-alanine in an ATP-dependent reaction via a pantoyl-adenylate intermediate. The sequence is that of Pantothenate synthetase from Methylibium petroleiphilum (strain ATCC BAA-1232 / LMG 22953 / PM1).